The sequence spans 150 residues: Putative solute carrier family 19 member 4 (150 aa).

The tract at residues 118-137 (PSVREGACNEKSTENKKPQD) is disordered. A compositionally biased stretch (basic and acidic residues) spans 124-136 (ACNEKSTENKKPQ).

The protein belongs to the reduced folate carrier (RFC) transporter (TC 2.A.48) family.

The sequence is that of Putative solute carrier family 19 member 4 from Homo sapiens (Human).